The primary structure comprises 438 residues: GTPase Der (438 aa).

EngA-type G domains are found at residues 2–164 and 173–343; these read HKVA…PEDD and IRIS…EKWQ. GTP-binding positions include 8–15, 55–59, 116–119, 179–186, 226–230, and 288–291; these read GRPNVGKS, DTGGL, NKID, DTAGI, and NKWD. The region spanning 344-428 is the KH-like domain; sequence SRIGTSELNR…PVRLKWKEKG (85 aa).

Belongs to the TRAFAC class TrmE-Era-EngA-EngB-Septin-like GTPase superfamily. EngA (Der) GTPase family. As to quaternary structure, associates with the 50S ribosomal subunit.

Functionally, GTPase that plays an essential role in the late steps of ribosome biogenesis. This chain is GTPase Der, found in Deinococcus radiodurans (strain ATCC 13939 / DSM 20539 / JCM 16871 / CCUG 27074 / LMG 4051 / NBRC 15346 / NCIMB 9279 / VKM B-1422 / R1).